The primary structure comprises 349 residues: DNA replication and repair protein RecF (349 aa).

Position 30–37 (Gly30–Thr37) interacts with ATP.

It belongs to the RecF family.

The protein localises to the cytoplasm. In terms of biological role, the RecF protein is involved in DNA metabolism; it is required for DNA replication and normal SOS inducibility. RecF binds preferentially to single-stranded, linear DNA. It also seems to bind ATP. This chain is DNA replication and repair protein RecF, found in Francisella tularensis subsp. novicida (strain U112).